Here is an 814-residue protein sequence, read N- to C-terminus: Dimethyl sulfoxide reductase DmsA (814 aa).

The segment at residues 1-45 (MKTKIPDAVLAAEVSRRGLVKTTAIGGLAMASSALTLPFSRIAHA) is a signal peptide (tat-type signal). The 4Fe-4S Mo/W bis-MGD-type domain occupies 56–118 (EKVIWSACTV…SMRRRVYNPD (63 aa)). The [4Fe-4S] cluster site is built by Cys63, Cys67, Cys71, and Cys104. Residues 172–176 (LGGTM), Ser205, 244–245 (ET), 270–271 (ID), 291–293 (GTD), 386–387 (WG), Arg390, Asn488, 512–513 (ID), His701, 707–709 (HST), Asn788, and 804–805 (SH) contribute to the Mo-bis(molybdopterin guanine dinucleotide) site.

The protein belongs to the prokaryotic molybdopterin-containing oxidoreductase family. Heterotrimeric enzyme composed of a catalytic heterodimer (DmsAB) and a membrane anchor protein (DmsC). [4Fe-4S] cluster is required as a cofactor. The cofactor is Mo-bis(molybdopterin guanine dinucleotide). Exported by the Tat system. The position of the signal peptide cleavage has been experimentally proven. Can also be exported by the Sec system.

Its subcellular location is the cell membrane. It carries out the reaction dimethyl sulfide + a menaquinone + H2O = dimethyl sulfoxide + a menaquinol. Its activity is regulated as follows. Inhibited by dithionite, sodium hydrogensulfite and tungstate. Its function is as follows. Catalyzes the reduction of dimethyl sulfoxide (DMSO) to dimethyl sulfide (DMS). DMSO reductase serves as the terminal reductase under anaerobic conditions, with DMSO being the terminal electron acceptor. Terminal reductase during anaerobic growth on various sulfoxides and N-oxide compounds. Allows E.coli to grow anaerobically on DMSO as respiratory oxidant. This Escherichia coli (strain K12) protein is Dimethyl sulfoxide reductase DmsA (dmsA).